We begin with the raw amino-acid sequence, 283 residues long: SNF1-related protein kinase regulatory subunit beta-1 (283 aa).

Residues 1-10 (MGNANGKDED) are compositionally biased toward basic and acidic residues. Residues 1 to 63 (MGNANGKDED…PARSPSPFLF (63 aa)) are disordered. Residue G2 is the site of N-myristoyl glycine attachment. Positions 43–60 (SDSMSSSPPGSPARSPSP) are enriched in low complexity. Positions 101–178 (PTIITWNQGG…VGNVCNILDV (78 aa)) are kinase-interacting sequence (KIS). Positions 215–283 (EPLAVPPQLH…TVVLYKPLTR (69 aa)) are association with SNF1 complex (ASC).

This sequence belongs to the 5'-AMP-activated protein kinase beta subunit family. In terms of assembly, subunit of a probable heterotrimeric complex consisting of an alpha catalytic (KIN10 or KIN11) subunit, and a beta (KINB) and a gamma (KING or SNF4) non-catalytic regulatory subunits. Interacts with SNF4 and CBL1. Interacts with FLZ1, FLZ2, FLZ8, FLZ9, FLZ10, FLZ12, FLZ13, FLZ14 and FLZ15. Sumoylated by SIZ1. Expressed in vegetative organs and, to lower extent, in reproductive organs.

It is found in the cell membrane. Regulatory subunit of the probable trimeric SNF1-related protein kinase (SnRK) complex, which may play a role in a signal transduction cascade regulating gene expression and carbohydrate metabolism in higher plants. The SnRK complex may also be involved in the regulation of fatty acid synthesis by phosphorylation of acetyl-CoA carboxylase and in assimilation of nitrogen by phosphorylating nitrate reductase. The protein is SNF1-related protein kinase regulatory subunit beta-1 (KINB1) of Arabidopsis thaliana (Mouse-ear cress).